Here is a 61-residue protein sequence, read N- to C-terminus: Phosphoenolpyruvate synthase (61 aa).

Belongs to the PEP-utilizing enzyme family. It depends on Mg(2+) as a cofactor.

The enzyme catalyses pyruvate + ATP + H2O = phosphoenolpyruvate + AMP + phosphate + 2 H(+). Its pathway is carbohydrate biosynthesis; gluconeogenesis. In terms of biological role, catalyzes the phosphorylation of pyruvate to phosphoenolpyruvate. This Enterobacter agglomerans (Erwinia herbicola) protein is Phosphoenolpyruvate synthase (ppsA).